The chain runs to 1183 residues: M-phase phosphoprotein 9 (1183 aa).

Disordered regions lie at residues 28–52 (GLNLNTDRSSPHLSTNGVSSFSGKT), 300–334 (KLKQNQPKRAHVEDGGSRSKQGNEQSKKTPIEKSD), and 472–495 (ISFSPDSVLEPSMSSPSDIDSFSQ). A compositionally biased stretch (basic and acidic residues) spans 324–334 (QSKKTPIEKSD). The tract at residues 401–800 (TSNEMKLPSL…EAQVKQVEHE (400 aa)) is required for its centrosomal localization. The tract at residues 451–500 (KPKQQISGIQPHGLPNALDDRISFSPDSVLEPSMSSPSDIDSFSQASNVT) is interaction with CEP97. Residues 483–495 (SMSSPSDIDSFSQ) show a composition bias toward low complexity. Residues 609-804 (DLRAYYESEI…KQVEHENMLS (196 aa)) are a coiled coil. Ser-781 carries the phosphoserine; by TTBK2 modification. Residue Lys-784 forms a Glycyl lysine isopeptide (Lys-Gly) (interchain with G-Cter in ubiquitin) linkage. Phosphoserine; by TTBK2 is present on Ser-788. The interaction with KIF24 stretch occupies residues 801-1031 (NMLSLRHNSR…PVSTLQRTNP (231 aa)). 2 disordered regions span residues 863–894 (LGHRSPLEKDSSPGSSSTSLLIKKQRETSDTP) and 910–999 (NWGT…GFSH). Residues 921-936 (SNINPRQTETSVNASR) show a composition bias toward polar residues. Positions 949 to 967 (LNSASQRSSSLPPSNRKSS) are enriched in low complexity. Ser-994 is subject to Phosphoserine. The stretch at 1109–1174 (RTLAETERFF…GSVRMTLKKF (66 aa)) forms a coiled coil.

In terms of assembly, interacts with CCP110, CEP97 and KIF24. In terms of processing, TTBK2-mediated phosphorylation at Ser-781 and Ser-788, promotes its ubiquitination at Lys-784 leading to proteasomal degradation, loss of MPHOSPH9 facilitates the removal of the CP110-CEP97 complex from the mother centrioles, promoting the initiation of ciliogenesis. Phosphorylated in M (mitotic) phase. Post-translationally, ubiquitinated at Lys-784, leading to proteasomal degradation.

It is found in the cytoplasm. The protein localises to the cytoskeleton. The protein resides in the microtubule organizing center. It localises to the centrosome. Its subcellular location is the centriole. It is found in the golgi apparatus membrane. In terms of biological role, negatively regulates cilia formation by recruiting the CP110-CEP97 complex (a negative regulator of ciliogenesis) at the distal end of the mother centriole in ciliary cells. At the beginning of cilia formation, MPHOSPH9 undergoes TTBK2-mediated phosphorylation and degradation via the ubiquitin-proteasome system and removes itself and the CP110-CEP97 complex from the distal end of the mother centriole, which subsequently promotes cilia formation. In Homo sapiens (Human), this protein is M-phase phosphoprotein 9 (MPHOSPH9).